Reading from the N-terminus, the 104-residue chain is Large ribosomal subunit protein uL23 (104 aa).

This sequence belongs to the universal ribosomal protein uL23 family. Part of the 50S ribosomal subunit. Contacts protein L29, and trigger factor when it is bound to the ribosome.

In terms of biological role, one of the early assembly proteins it binds 23S rRNA. One of the proteins that surrounds the polypeptide exit tunnel on the outside of the ribosome. Forms the main docking site for trigger factor binding to the ribosome. The chain is Large ribosomal subunit protein uL23 from Burkholderia multivorans (strain ATCC 17616 / 249).